Reading from the N-terminus, the 103-residue chain is Trp operon repressor homolog (103 aa).

Residues 59 to 82 (QRQISQMLGVGIATITRGSNELKS) mediate DNA binding.

This sequence belongs to the TrpR family. In terms of assembly, homodimer.

The protein localises to the cytoplasm. This protein is an aporepressor. When complexed with L-tryptophan it binds the operator region of the trp operon and prevents the initiation of transcription. The polypeptide is Trp operon repressor homolog (Vibrio parahaemolyticus serotype O3:K6 (strain RIMD 2210633)).